A 282-amino-acid chain; its full sequence is Biotin synthase (282 aa).

The Radical SAM core domain occupies 1–228; it reads MQEIFLCSIS…NARLMVAGGR (228 aa). [4Fe-4S] cluster is bound by residues Cys17, Cys21, and Cys24. [2Fe-2S] cluster is bound by residues Cys61, Cys96, Cys154, and Arg221.

The protein belongs to the radical SAM superfamily. Biotin synthase family. Homodimer. [4Fe-4S] cluster serves as cofactor. It depends on [2Fe-2S] cluster as a cofactor.

The catalysed reaction is (4R,5S)-dethiobiotin + (sulfur carrier)-SH + 2 reduced [2Fe-2S]-[ferredoxin] + 2 S-adenosyl-L-methionine = (sulfur carrier)-H + biotin + 2 5'-deoxyadenosine + 2 L-methionine + 2 oxidized [2Fe-2S]-[ferredoxin]. It functions in the pathway cofactor biosynthesis; biotin biosynthesis; biotin from 7,8-diaminononanoate: step 2/2. Its function is as follows. Catalyzes the conversion of dethiobiotin (DTB) to biotin by the insertion of a sulfur atom into dethiobiotin via a radical-based mechanism. This Helicobacter pylori (strain G27) protein is Biotin synthase.